A 293-amino-acid polypeptide reads, in one-letter code: MKVLAIDIGGTKIALGNVVEGHLQHRKQFPTPVVNDATTLAKEILAHCQAWLSDVDAIGISTTGLVSEQGISAINPGTLSFPTPFPLHSELHRLSGKPVKMLNDAQAAAWYEFLQLSPELDVRNMAYITVSTGVGGGLVINQQLHKGKSNFAGHIGHTVLDPNGPLCGCQQRGCVEAIASGNAINAGAQALFGQAISNIELFQLAQHNEQASTLIQQSAEAIAQLCLNLKATLDLDLVVIGGGVGLARGYLARVQAFIDKQPLVFQVKVRAAVGDYDACLLGAAFQFEESNLS.

Residues 5–12 (AIDIGGTK) and 133–140 (GVGGGLVI) each bind ATP. Zn(2+)-binding residues include H157, C167, C169, and C174.

The protein belongs to the ROK (NagC/XylR) family. NanK subfamily. In terms of assembly, homodimer.

It catalyses the reaction an N-acyl-D-mannosamine + ATP = an N-acyl-D-mannosamine 6-phosphate + ADP + H(+). It participates in amino-sugar metabolism; N-acetylneuraminate degradation; D-fructose 6-phosphate from N-acetylneuraminate: step 2/5. Its function is as follows. Catalyzes the phosphorylation of N-acetylmannosamine (ManNAc) to ManNAc-6-P. This Vibrio vulnificus (strain CMCP6) protein is N-acetylmannosamine kinase.